The chain runs to 330 residues: D-lactate dehydrogenase (330 aa).

NAD(+) contacts are provided by residues 155–156 (RI), aspartate 175, 206–207 (MP), asparagine 212, 233–235 (MAR), and aspartate 259. Residue arginine 235 is part of the active site. Residue glutamate 264 is part of the active site. Catalysis depends on histidine 296, which acts as the Proton donor.

Belongs to the D-isomer specific 2-hydroxyacid dehydrogenase family.

It carries out the reaction (R)-lactate + NAD(+) = pyruvate + NADH + H(+). This Streptococcus agalactiae serotype V (strain ATCC BAA-611 / 2603 V/R) protein is D-lactate dehydrogenase (ldhD).